The sequence spans 318 residues: Homoserine O-succinyltransferase (318 aa).

Catalysis depends on C142, which acts as the Acyl-thioester intermediate. Substrate contacts are provided by K163 and S192. H235 (proton acceptor) is an active-site residue. Residue E237 is part of the active site. R249 serves as a coordination point for substrate.

Belongs to the MetA family.

The protein localises to the cytoplasm. The enzyme catalyses L-homoserine + succinyl-CoA = O-succinyl-L-homoserine + CoA. It functions in the pathway amino-acid biosynthesis; L-methionine biosynthesis via de novo pathway; O-succinyl-L-homoserine from L-homoserine: step 1/1. Functionally, transfers a succinyl group from succinyl-CoA to L-homoserine, forming succinyl-L-homoserine. The sequence is that of Homoserine O-succinyltransferase from Shewanella putrefaciens (strain CN-32 / ATCC BAA-453).